Here is a 654-residue protein sequence, read N- to C-terminus: Cysteine-rich receptor-like protein kinase 40 (654 aa).

The signal sequence occupies residues 1–27; the sequence is MGKCSALMIFLSSSLLLVLQTLHVVNA. 2 consecutive Gnk2-homologous domains span residues 28–131 and 143–250; these read VKCF…NQST and WPSP…LYSF. Over 28–287 the chain is Extracellular; it reads VKCFGNSFNG…VKKGKSIGYG (260 aa). N-linked (GlcNAc...) asparagine glycans are attached at residues N38, N65, N128, N154, N167, and N256. A helical transmembrane segment spans residues 288 to 308; that stretch reads GIIAIVVVFTFINLLVFIGFI. Residues 309 to 654 lie on the Cytoplasmic side of the membrane; the sequence is KVYARRGKLN…DDVFTELSCR (346 aa). Residues 348–619 form the Protein kinase domain; the sequence is FSSENTLGQG…VIIWLGSETI (272 aa). Residues 354 to 362 and K376 each bind ATP; that span reads LGQGGFGTV. Phosphotyrosine is present on Y421. The Proton acceptor role is filled by D473. Phosphoserine is present on S477. Phosphothreonine is present on T513. Y521 carries the phosphotyrosine modification.

It belongs to the protein kinase superfamily. Ser/Thr protein kinase family. CRK subfamily.

It is found in the membrane. It catalyses the reaction L-seryl-[protein] + ATP = O-phospho-L-seryl-[protein] + ADP + H(+). The enzyme catalyses L-threonyl-[protein] + ATP = O-phospho-L-threonyl-[protein] + ADP + H(+). The polypeptide is Cysteine-rich receptor-like protein kinase 40 (CRK40) (Arabidopsis thaliana (Mouse-ear cress)).